The sequence spans 308 residues: Ribosomal RNA small subunit methyltransferase H (308 aa).

S-adenosyl-L-methionine is bound by residues 36–38, Asp55, Phe86, Asp103, and Gln110; that span reads GGH.

The protein belongs to the methyltransferase superfamily. RsmH family.

The protein localises to the cytoplasm. It catalyses the reaction cytidine(1402) in 16S rRNA + S-adenosyl-L-methionine = N(4)-methylcytidine(1402) in 16S rRNA + S-adenosyl-L-homocysteine + H(+). Specifically methylates the N4 position of cytidine in position 1402 (C1402) of 16S rRNA. The chain is Ribosomal RNA small subunit methyltransferase H from Helicobacter pylori (strain B38).